Consider the following 478-residue polypeptide: H(+)/Cl(-) exchange transporter ClcA (478 aa).

Residues 1–32 lie on the Cytoplasmic side of the membrane; that stretch reads MTHSTQQLSPEGVAEGKRGRLIRELVNRDKTP. Residues 33–69 traverse the membrane as a helical segment; sequence LIILIMAAVVGVVTGLLGVAFDRGVDWVQQQRLLALA. Residues 70–76 lie on the Periplasmic side of the membrane; it reads NVADYAL. Residues 77-100 traverse the membrane as a helical segment; it reads LVWPLAFIMSALLAMMGYFLVSRF. A Selectivity filter part_1 motif is present at residues 106 to 110; that stretch reads GSGIP. Serine 107 lines the chloride pocket. The segment at residues 109–116 is an intramembrane region (helical); that stretch reads IPEIEGAM. Residues 117 to 123 are Cytoplasmic-facing; it reads EEMRPVR. 2 helical membrane-spanning segments follow: residues 124–141 and 148–166; these read WWRV…TLGA and EGPM…VDIF. Positions 146-150 match the Selectivity filter part_2 motif; that stretch reads GREGP. The Cytoplasmic portion of the chain corresponds to 167 to 176; that stretch reads RLRSPEARHS. Intramembrane regions (helical) lie at residues 177–189 and 193–201; these read LLAT…LSAA and PLAGILFVI. The Cytoplasmic portion of the chain corresponds to 202-214; the sequence is EEMRSQFRYSLVS. A helical membrane pass occupies residues 215-232; that stretch reads IKAVFIGVITSTIVYRYF. Topologically, residues 233–252 are periplasmic; that stretch reads NGERAIIEVGKLSDAPLNTL. The chain crosses the membrane as a helical span at residues 253-281; sequence WLYLLLGIIFGAVGVIFNALIFRTQDMFV. Over 282 to 287 the chain is Cytoplasmic; it reads RFHGGD. Residues 288-309 traverse the membrane as a helical segment; the sequence is WRKLVLIGGLLGGMCGLLALLH. The Periplasmic segment spans residues 310–329; sequence GNAVGGGFALIPIAAAGNFS. The next 2 helical transmembrane spans lie at 330-349 and 355-376; these read IGML…LCFG and GIFA…LSCA. Positions 355 to 359 match the Selectivity filter part_3 motif; the sequence is GIFAP. Chloride contacts are provided by isoleucine 356 and phenylalanine 357. At 377 to 386 the chain is on the periplasmic side; it reads HFFPQYGIEA. Residues 387–401 constitute an intramembrane region (helical); sequence GTFAIAGMGALFAAS. Positions 402 to 404 form an intramembrane region, note=Loop between two helices; the sequence is VRA. Residues 405–416 constitute an intramembrane region (helical); it reads PLTGIVLVLEMT. The note=Loop between two helices intramembrane region spans 417–421; that stretch reads DNYQL. Residues 422–438 traverse the membrane as a helical segment; the sequence is ILPMIVTCLGATLIAQF. At 439–478 the chain is on the cytoplasmic side; sequence MGGKPLYSAILARTLAKQEQARATVIAQEPAVENTPQIGK. Tyrosine 445 contributes to the chloride binding site.

The protein belongs to the chloride channel (TC 2.A.49) family. ClcA subfamily. Homodimer.

The protein localises to the cell inner membrane. The catalysed reaction is 2 chloride(in) + H(+)(out) = 2 chloride(out) + H(+)(in). Proton-coupled chloride transporter. Functions as antiport system and exchanges two chloride ions for 1 proton. Probably acts as an electrical shunt for an outwardly-directed proton pump that is linked to amino acid decarboxylation, as part of the extreme acid resistance (XAR) response. This Yersinia pestis bv. Antiqua (strain Antiqua) protein is H(+)/Cl(-) exchange transporter ClcA.